The sequence spans 220 residues: UPF0502 protein Pnap_3223 (220 aa).

It belongs to the UPF0502 family.

The chain is UPF0502 protein Pnap_3223 from Polaromonas naphthalenivorans (strain CJ2).